Consider the following 943-residue polypeptide: Nuclear receptor coactivator 7 (943 aa).

M1 carries the post-translational modification N-acetylmethionine. Positions 1 to 15 (MDTKEEKKEQKERKQ) are enriched in basic and acidic residues. A coiled-coil region spans residues 1-32 (MDTKEEKKEQKERKQSYFARLKKKKQAKQNAE). The tract at residues 1–83 (MDTKEEKKEQ…RKSNQLKEIR (83 aa)) is disordered. Position 92 is a phosphoserine (S92). Residues 117–160 (MEYTAGSQDTLNSVALKFNVTPNKLVELNKLFTHTIVPGQVLFV) form the LysM domain. Residue T137 is modified to Phosphothreonine. The tract at residues 169–189 (TIQLSSSTPGATVSPSSSDAE) is disordered. Residues 177–187 (PGATVSPSSSD) are compositionally biased toward polar residues. 5 positions are modified to phosphoserine: S182, S186, S211, S212, and S214. Residues 334–369 (EKRQQNGERTLALDAKSVRSPEESTERTCTRIEPPD) form a disordered region. Residues 349–369 (KSVRSPEESTERTCTRIEPPD) are compositionally biased toward basic and acidic residues. S442, S498, and S500 each carry phosphoserine. Residues 486–499 (EKQDEAPEVDKHSG) are compositionally biased toward basic and acidic residues. Disordered regions lie at residues 486–507 (EKQD…LGES) and 543–576 (LSDR…NKEP). Residues 782–943 (ALLENMHIEQ…VQDLEVWTFE (162 aa)) enclose the TLDc domain.

The protein belongs to the OXR1 family. As to quaternary structure, interacts with ESR1, ESR2A, ESR2B, THRB, PPARG and RARA in a ligand-inducible manner. Interacts with the heterodimer AHR-ARNT. In terms of tissue distribution, highly expressed in brain and kidney. Weakly expressed in mammary gland, lung and testis. In brain, expression is found in neurons of cerebral cortex, thalamus, hypothalamus, hippocampus, cerebellum, striatum and choroid plexus.

The protein resides in the nucleus. Its function is as follows. Enhances the transcriptional activities of several nuclear receptors. Involved in the coactivation of different nuclear receptors, such as ESR1, THRB, PPARG and RARA. This chain is Nuclear receptor coactivator 7 (Ncoa7), found in Mus musculus (Mouse).